Here is a 389-residue protein sequence, read N- to C-terminus: Ecto-ADP-ribosyltransferase 3 (389 aa).

The signal sequence occupies residues 1 to 26; sequence MKTGHFEIVTMLLATMILVDIFQVKA. The cysteines at positions 43 and 256 are disulfide-linked. The TR mART core domain occupies 64-251; that stretch reads QQLDTVWENA…LILQSINKTC (188 aa). Residues Y101 and R163 each contribute to the NAD(+) site. Residue N248 is glycosylated (N-linked (GlcNAc...) asparagine). Tandem repeats lie at residues 283 to 292, 293 to 302, and 303 to 312. The tract at residues 283 to 312 is 3 X 10 AA tandem repeats of [GS]-E-K-N-[QW]-K-L-E-D-H; sequence GEKNQKLEDHSEKNWKLEDHGEKNQKLEDH. A disordered region spans residues 325 to 362; that stretch reads MKIPEPFPLPEDKSQGNINNPTPGPVPVPGPKSHPSAS. An O-linked (GalNAc...) threonine glycan is attached at T346. Residues 346–356 are compositionally biased toward pro residues; sequence TPGPVPVPGPK. A lipid anchor (GPI-anchor amidated serine) is attached at S362. A propeptide spans 363-389 (removed in mature form); sequence SGKLLLPQFGMVIILISVSAINLFVAL.

This sequence belongs to the Arg-specific ADP-ribosyltransferase family. O-glycosylated with core 1 or possibly core 8 glycans. Testis specific.

It localises to the cell membrane. It catalyses the reaction L-arginyl-[protein] + NAD(+) = N(omega)-(ADP-D-ribosyl)-L-arginyl-[protein] + nicotinamide + H(+). This chain is Ecto-ADP-ribosyltransferase 3 (ART3), found in Homo sapiens (Human).